The sequence spans 335 residues: UPF0353 protein MAP_3435c (335 aa).

Helical transmembrane passes span 18 to 38 (WFFLALLAVLLVIGLYVVQQF) and 67 to 87 (VPTILLATSLVLLTTAMAGPT). The VWFA domain maps to 98–294 (VVMLVIDVSE…DSLKNVYSTL (197 aa)). The chain crosses the membrane as a helical span at residues 309–329 (MAWMLLGAVVLAGAVLAGLLL).

This sequence belongs to the UPF0353 family.

The protein resides in the cell membrane. This Mycolicibacterium paratuberculosis (strain ATCC BAA-968 / K-10) (Mycobacterium paratuberculosis) protein is UPF0353 protein MAP_3435c.